The chain runs to 106 residues: UPF0060 membrane protein Csal_2746 (106 aa).

Transmembrane regions (helical) follow at residues 6–26 (LLFIATAMAEIIGCYLPWLWL), 31–51 (SPWLLVPAAASLTLFVWLLSL), 59–79 (VYAAYGGVYVVCALVWLWGVD), and 85–105 (PTDWIGAALALTGMGVIASGW).

Belongs to the UPF0060 family.

It is found in the cell inner membrane. In Chromohalobacter salexigens (strain ATCC BAA-138 / DSM 3043 / CIP 106854 / NCIMB 13768 / 1H11), this protein is UPF0060 membrane protein Csal_2746.